A 153-amino-acid polypeptide reads, in one-letter code: Pheromone-binding protein Gp-9 (153 aa).

The signal sequence occupies residues 1-19 (MKTFVLHIFIFALVAFASA). Cystine bridges form between Cys37–Cys77, Cys73–Cys129, and Cys118–Cys138.

This sequence belongs to the PBP/GOBP family. Homodimer.

It localises to the secreted. Colony queen number, a major feature of social organization, is associated with worker genotype for Gp-9. Colonies are headed by either a single reproductive queen (monogyne form) or multiple queens (polygyne form). Differences in worker Gp-9 genotypes between social forms may cause differences in workers' abilities to recognize queens and regulate their numbers. This is Pheromone-binding protein Gp-9 from Solenopsis invicta (Red imported fire ant).